A 375-amino-acid polypeptide reads, in one-letter code: Probable L-tyrosine/L-aspartate decarboxylase (375 aa).

K226 is subject to N6-(pyridoxal phosphate)lysine.

It belongs to the group II decarboxylase family. MfnA subfamily. Pyridoxal 5'-phosphate is required as a cofactor.

It carries out the reaction L-tyrosine + H(+) = tyramine + CO2. The enzyme catalyses L-aspartate + H(+) = beta-alanine + CO2. It functions in the pathway cofactor biosynthesis; methanofuran biosynthesis. Its pathway is cofactor biosynthesis; coenzyme A biosynthesis. In terms of biological role, catalyzes the decarboxylation of L-tyrosine to produce tyramine for methanofuran biosynthesis. Can also catalyze the decarboxylation of L-aspartate to produce beta-alanine for coenzyme A (CoA) biosynthesis. The sequence is that of Probable L-tyrosine/L-aspartate decarboxylase from Methanocella arvoryzae (strain DSM 22066 / NBRC 105507 / MRE50).